We begin with the raw amino-acid sequence, 212 residues long: Cytochrome c biogenesis ATP-binding export protein CcmA (212 aa).

An ABC transporter domain is found at 8 to 212 (LQATALACER…RSIDLAKGSA (205 aa)). 40–47 (GPNGSGKT) serves as a coordination point for ATP.

Belongs to the ABC transporter superfamily. CcmA exporter (TC 3.A.1.107) family. The complex is composed of two ATP-binding proteins (CcmA) and two transmembrane proteins (CcmB).

Its subcellular location is the cell inner membrane. It carries out the reaction heme b(in) + ATP + H2O = heme b(out) + ADP + phosphate + H(+). Its function is as follows. Part of the ABC transporter complex CcmAB involved in the biogenesis of c-type cytochromes; once thought to export heme, this seems not to be the case, but its exact role is uncertain. Responsible for energy coupling to the transport system. This chain is Cytochrome c biogenesis ATP-binding export protein CcmA, found in Pseudomonas syringae pv. tomato (strain ATCC BAA-871 / DC3000).